We begin with the raw amino-acid sequence, 307 residues long: MGSQLALKSRIHSTESLAKIFNAQEMIASSHIAKARDVALNAKPYSDAIFDAVQALVAHTHITHPIAVKDENNPRVAVLALTSDRGMAGPYTSSIIRETESLLSRLDAAGKQPELFVYGRRGSTYYKYRNRDIAATWEGNTDQPGVEIAETISDTLMDAYMKPAEKGGVSELYIVYTEFINMVVQKVRVLRMLPVEIVQNETKVPSPDEAAPSTADIAPLYTFEPSLEKVLDAILPKYIQSRIHECLLTAAASETASRQNAMHTATDNARNLIDDLTRKLNASRQASITQELTEIIGSADALTKKEE.

Belongs to the ATPase gamma chain family. F-type ATPases have 2 components, CF(1) - the catalytic core - and CF(0) - the membrane proton channel. CF(1) has five subunits: alpha(3), beta(3), gamma(1), delta(1), epsilon(1). CF(0) has three main subunits: a, b and c.

Its subcellular location is the cell membrane. Its function is as follows. Produces ATP from ADP in the presence of a proton gradient across the membrane. The gamma chain is believed to be important in regulating ATPase activity and the flow of protons through the CF(0) complex. The protein is ATP synthase gamma chain of Bifidobacterium longum subsp. infantis (strain ATCC 15697 / DSM 20088 / JCM 1222 / NCTC 11817 / S12).